The chain runs to 363 residues: Alanine racemase (363 aa).

K35 serves as the catalytic Proton acceptor; specific for D-alanine. An N6-(pyridoxal phosphate)lysine modification is found at K35. R134 provides a ligand contact to substrate. Residue Y259 is the Proton acceptor; specific for L-alanine of the active site. M307 is a substrate binding site.

It belongs to the alanine racemase family. It depends on pyridoxal 5'-phosphate as a cofactor.

It carries out the reaction L-alanine = D-alanine. Its pathway is amino-acid biosynthesis; D-alanine biosynthesis; D-alanine from L-alanine: step 1/1. Functionally, catalyzes the interconversion of L-alanine and D-alanine. May also act on other amino acids. The polypeptide is Alanine racemase (alr) (Shewanella denitrificans (strain OS217 / ATCC BAA-1090 / DSM 15013)).